Here is a 1486-residue protein sequence, read N- to C-terminus: Chromosome partition protein MukB (1486 aa).

Residue 34–41 coordinates ATP; sequence GGNGAGKS. Coiled coils occupy residues 326–418, 444–480, and 509–603; these read LEAD…QYNQ, LETFQAKELEATEKMLSLEQKMSMAQTAHSQFEQAYQ, and RHLA…RAPV. Residues 666–783 are flexible hinge; it reads PGGSEDQRLN…EVPLFGRAAR (118 aa). 3 coiled-coil regions span residues 835–923, 977–1115, and 1209–1266; these read EAEI…AKLE, EMLS…TAKA, and VEAI…QNVS.

This sequence belongs to the SMC family. MukB subfamily. In terms of assembly, homodimerization via its hinge domain. Binds to DNA via its C-terminal region. Interacts, and probably forms a ternary complex, with MukE and MukF via its C-terminal region. The complex formation is stimulated by calcium or magnesium. Interacts with tubulin-related protein FtsZ.

The protein localises to the cytoplasm. It is found in the nucleoid. Plays a central role in chromosome condensation, segregation and cell cycle progression. Functions as a homodimer, which is essential for chromosome partition. Involved in negative DNA supercoiling in vivo, and by this means organize and compact chromosomes. May achieve or facilitate chromosome segregation by condensation DNA from both sides of a centrally located replisome during cell division. The sequence is that of Chromosome partition protein MukB from Escherichia coli O17:K52:H18 (strain UMN026 / ExPEC).